Here is a 322-residue protein sequence, read N- to C-terminus: Transcription cofactor vestigial-like protein 2 (322 aa).

Residues 42–61 show a composition bias toward low complexity; that stretch reads ASPGSSASGSSSFSNPTPAS. 2 disordered regions span residues 42–75 and 248–322; these read ASPGSSASGSSSFSNPTPASVKEEEGSPEKERPP and PGRL…PTLG. Over residues 62-75 the composition is skewed to basic and acidic residues; the sequence is VKEEEGSPEKERPP. Low complexity-rich tracts occupy residues 248 to 258 and 270 to 283; these read PGRLAPASAPA and GEPAGSAWAAPGGP. Positions 312–322 are enriched in pro residues; that stretch reads SAPPALYPTLG.

It belongs to the vestigial family. As to quaternary structure, interacts with TEFs. Binds to TEAD1/TEF1. In terms of tissue distribution, skeletal muscle specific.

It is found in the nucleus. Functionally, may act as a specific coactivator for the mammalian TEFs. May play a role in the development of skeletal muscles. The sequence is that of Transcription cofactor vestigial-like protein 2 (Vgll2) from Mus musculus (Mouse).